Here is a 279-residue protein sequence, read N- to C-terminus: 4-hydroxy-3-methylbut-2-enyl diphosphate reductase (279 aa).

Cysteine 12 serves as a coordination point for [4Fe-4S] cluster. 2 residues coordinate (2E)-4-hydroxy-3-methylbut-2-enyl diphosphate: histidine 40 and histidine 70. Positions 40 and 70 each coordinate dimethylallyl diphosphate. Isopentenyl diphosphate-binding residues include histidine 40 and histidine 70. Cysteine 92 contributes to the [4Fe-4S] cluster binding site. Histidine 119 is a (2E)-4-hydroxy-3-methylbut-2-enyl diphosphate binding site. Histidine 119 is a dimethylallyl diphosphate binding site. Histidine 119 provides a ligand contact to isopentenyl diphosphate. The active-site Proton donor is glutamate 121. A (2E)-4-hydroxy-3-methylbut-2-enyl diphosphate-binding site is contributed by threonine 151. [4Fe-4S] cluster is bound at residue cysteine 181. Residues serine 209, serine 210, asparagine 211, and serine 251 each contribute to the (2E)-4-hydroxy-3-methylbut-2-enyl diphosphate site. Dimethylallyl diphosphate contacts are provided by serine 209, serine 210, asparagine 211, and serine 251. Serine 209, serine 210, asparagine 211, and serine 251 together coordinate isopentenyl diphosphate.

The protein belongs to the IspH family. It depends on [4Fe-4S] cluster as a cofactor.

The catalysed reaction is isopentenyl diphosphate + 2 oxidized [2Fe-2S]-[ferredoxin] + H2O = (2E)-4-hydroxy-3-methylbut-2-enyl diphosphate + 2 reduced [2Fe-2S]-[ferredoxin] + 2 H(+). It carries out the reaction dimethylallyl diphosphate + 2 oxidized [2Fe-2S]-[ferredoxin] + H2O = (2E)-4-hydroxy-3-methylbut-2-enyl diphosphate + 2 reduced [2Fe-2S]-[ferredoxin] + 2 H(+). The protein operates within isoprenoid biosynthesis; dimethylallyl diphosphate biosynthesis; dimethylallyl diphosphate from (2E)-4-hydroxy-3-methylbutenyl diphosphate: step 1/1. It participates in isoprenoid biosynthesis; isopentenyl diphosphate biosynthesis via DXP pathway; isopentenyl diphosphate from 1-deoxy-D-xylulose 5-phosphate: step 6/6. Catalyzes the conversion of 1-hydroxy-2-methyl-2-(E)-butenyl 4-diphosphate (HMBPP) into a mixture of isopentenyl diphosphate (IPP) and dimethylallyl diphosphate (DMAPP). Acts in the terminal step of the DOXP/MEP pathway for isoprenoid precursor biosynthesis. This chain is 4-hydroxy-3-methylbut-2-enyl diphosphate reductase, found in Thermotoga neapolitana (strain ATCC 49049 / DSM 4359 / NBRC 107923 / NS-E).